Reading from the N-terminus, the 272-residue chain is R-spondin-3 (272 aa).

An N-terminal signal peptide occupies residues 1-21; sequence MHLRLISWLFIILNFMEYIGS. FU repeat units follow at residues 35–86 and 92–135; these read PNVS…GYYG and INKC…GLEA. Asparagine 36 carries an N-linked (GlcNAc...) asparagine glycan. 11 disulfides stabilise this stretch: cysteine 41–cysteine 48, cysteine 45–cysteine 54, cysteine 57–cysteine 76, cysteine 80–cysteine 95, cysteine 98–cysteine 105, cysteine 102–cysteine 111, cysteine 114–cysteine 125, cysteine 129–cysteine 142, cysteine 148–cysteine 190, cysteine 159–cysteine 166, and cysteine 199–cysteine 206. The TSP type-1 domain maps to 147–207; the sequence is HCEVSEWNPW…KCTVQRKKCQ (61 aa). The disordered stretch occupies residues 201-272; that stretch reads VQRKKCQKGE…QKSVSVSTVH (72 aa). The segment covering 213-223 has biased composition (basic residues); it reads KKGRERKRKKP. Basic and acidic residues predominate over residues 224–252; it reads NKGESKEAIPDSKSLESSKEIPEQRENKQ.

It belongs to the R-spondin family. In terms of assembly, interacts with the extracellular domain of FZD8 and LRP6. It however does not form a ternary complex with FZD8 and LRP6. Interacts with WNT1. Binds heparin. Interacts with LGR4, LGR5 and LGR6. As to expression, ubiquitously expressed. Expressed at higher level in placenta, small intestine, fetal thymus and lymph node. Highly expressed in endothelial cells.

It localises to the secreted. Activator of the canonical Wnt signaling pathway by acting as a ligand for LGR4-6 receptors, which acts as a key regulator of angiogenesis. Upon binding to LGR4-6 (LGR4, LGR5 or LGR6), LGR4-6 associate with phosphorylated LRP6 and frizzled receptors that are activated by extracellular Wnt receptors, triggering the canonical Wnt signaling pathway to increase expression of target genes. Also regulates the canonical Wnt/beta-catenin-dependent pathway and non-canonical Wnt signaling by acting as an inhibitor of ZNRF3, an important regulator of the Wnt signaling pathway. Acts as a ligand for frizzled FZD8 and LRP6. May negatively regulate the TGF-beta pathway. Acts as a key regulator of angiogenesis by controlling vascular stability and pruning: acts by activating the non-canonical Wnt signaling pathway in endothelial cells. Can also amplify Wnt signaling pathway independently of LGR4-6 receptors, possibly by acting as a direct antagonistic ligand to RNF43 and ZNRF3. The chain is R-spondin-3 (RSPO3) from Homo sapiens (Human).